A 375-amino-acid polypeptide reads, in one-letter code: Eukaryotic translation initiation factor 3 subunit F (375 aa).

The region spanning 30–166 is the MPN domain; the sequence is VVIQPQALFS…TRAYISAPVG (137 aa). The segment at 307 to 375 is disordered; sequence LGGESGSGES…EAQNGKEEKK (69 aa). Gly residues predominate over residues 323–332; that stretch reads QRGGKGGRGG. Composition is skewed to basic and acidic residues over residues 336-345 and 358-375; these read TQERSGEEAR and RSYEERTNEAQNGKEEKK.

It belongs to the eIF-3 subunit F family. In terms of assembly, component of the eukaryotic translation initiation factor 3 (eIF-3) complex.

It is found in the cytoplasm. Its function is as follows. Component of the eukaryotic translation initiation factor 3 (eIF-3) complex, which is involved in protein synthesis of a specialized repertoire of mRNAs and, together with other initiation factors, stimulates binding of mRNA and methionyl-tRNAi to the 40S ribosome. The eIF-3 complex specifically targets and initiates translation of a subset of mRNAs involved in cell proliferation. The sequence is that of Eukaryotic translation initiation factor 3 subunit F from Aspergillus niger (strain ATCC MYA-4892 / CBS 513.88 / FGSC A1513).